A 304-amino-acid polypeptide reads, in one-letter code: Porphobilinogen deaminase (304 aa).

An S-(dipyrrolylmethanemethyl)cysteine modification is found at C240.

The protein belongs to the HMBS family. As to quaternary structure, monomer. Requires dipyrromethane as cofactor.

The enzyme catalyses 4 porphobilinogen + H2O = hydroxymethylbilane + 4 NH4(+). It participates in porphyrin-containing compound metabolism; protoporphyrin-IX biosynthesis; coproporphyrinogen-III from 5-aminolevulinate: step 2/4. Its function is as follows. Tetrapolymerization of the monopyrrole PBG into the hydroxymethylbilane pre-uroporphyrinogen in several discrete steps. The polypeptide is Porphobilinogen deaminase (Xanthomonas axonopodis pv. citri (strain 306)).